A 296-amino-acid polypeptide reads, in one-letter code: NmrA-like family domain-containing protein 1 (296 aa).

Residues Gly-11–Gln-16, Arg-37–Arg-41, Asp-58–Gln-59, Thr-79–Phe-81, Lys-133, and Tyr-155–Asn-158 contribute to the NADP(+) site.

This sequence belongs to the NmrA-type oxidoreductase family. As to quaternary structure, homodimer.

The protein localises to the cytoplasm. Its subcellular location is the perinuclear region. The protein resides in the nucleus. Its function is as follows. Redox sensor protein. Undergoes restructuring and subcellular redistribution in response to changes in intracellular NADPH/NADP(+) levels. The protein is NmrA-like family domain-containing protein 1 (NMRAL1) of Gallus gallus (Chicken).